The following is a 279-amino-acid chain: MRKGASNLNVSTAQRAAPMVSEAPIVMDCKLDKIFYGNFMAVRDSHVPIRKNEITGFIGPSGCGKSTVLRSLNRMNDLVKGFRFEGHVHFLGQDVYGKGVDPVVVRRYIGMVFQQPNPFSMSIFDNVAFGLRLNRYKGDLGDRVKHALQGAALWDEVKDKLKVSGLSLSGGQQQRLCIARAIATEPEVLLLDEPCSALDPIATRRVEELMVELKKDYTIALVTHNMQQAIRVADTTAFFSVDISQGTRTGYLVEMGPTAQIFQNPREQLTSDYISGKFS.

Residues 26-274 (VMDCKLDKIF…PREQLTSDYI (249 aa)) form the ABC transporter domain. 59-66 (GPSGCGKS) contacts ATP.

The protein belongs to the ABC transporter superfamily. Phosphate importer (TC 3.A.1.7) family. In terms of assembly, the complex is composed of two ATP-binding proteins (PstB), two transmembrane proteins (PstC and PstA) and a solute-binding protein (PstS).

The protein resides in the cell inner membrane. It catalyses the reaction phosphate(out) + ATP + H2O = ADP + 2 phosphate(in) + H(+). Part of the ABC transporter complex PstSACB involved in phosphate import. Responsible for energy coupling to the transport system. This chain is Phosphate import ATP-binding protein PstB 1, found in Pseudomonas putida (strain ATCC 47054 / DSM 6125 / CFBP 8728 / NCIMB 11950 / KT2440).